Here is a 114-residue protein sequence, read N- to C-terminus: PDZK1-interacting protein 1 (114 aa).

Residues 1-28 (MSALSLVILGLLMAVPPASCQQGLGNLQ) lie on the Extracellular side of the membrane. Residues 29 to 51 (PWMQGLIAVAVFLVLVAIAFAIN) traverse the membrane as a helical segment. Over 52 to 114 (HFWCQEEREP…EEGRVHSTPM (63 aa)) the chain is Cytoplasmic. Ser-85 is modified (phosphoserine). The disordered stretch occupies residues 92–114 (SNEHENAYENTSEEEGRVHSTPM). Positions 105 to 114 (EEGRVHSTPM) are enriched in basic and acidic residues.

This sequence belongs to the PDZK1-interacting protein 1/SMIM24 family. In terms of assembly, forms a heterodimer (via N-terminal transmembrane helix) with SLC5A2/SGLT2 (via TM13); this interaction enhances SLC5A2 transporter activity. Interacts with PDZK1.

The protein resides in the apical cell membrane. Functionally, auxiliary protein of electrogenic Na(+)-coupled sugar symporter SLC5A2/SGLT2 and SLC5A1/SGLT1. Essential for the transporter activity of SLC5A2/SGLT2 but not SLC5A1/SGLT1. This is PDZK1-interacting protein 1 from Sus scrofa (Pig).